Here is a 177-residue protein sequence, read N- to C-terminus: Cyclic pyranopterin monophosphate synthase (177 aa).

Substrate contacts are provided by residues leucine 89–histidine 91 and methionine 125–glutamate 126. Aspartate 140 is an active-site residue.

Belongs to the MoaC family. Homohexamer; trimer of dimers.

The enzyme catalyses (8S)-3',8-cyclo-7,8-dihydroguanosine 5'-triphosphate = cyclic pyranopterin phosphate + diphosphate. It functions in the pathway cofactor biosynthesis; molybdopterin biosynthesis. Its function is as follows. Catalyzes the conversion of (8S)-3',8-cyclo-7,8-dihydroguanosine 5'-triphosphate to cyclic pyranopterin monophosphate (cPMP). This chain is Cyclic pyranopterin monophosphate synthase, found in Streptomyces griseus subsp. griseus (strain JCM 4626 / CBS 651.72 / NBRC 13350 / KCC S-0626 / ISP 5235).